Here is a 91-residue protein sequence, read N- to C-terminus: Putative regulatory protein Moth_0891 (91 aa).

This sequence belongs to the RemA family.

This Moorella thermoacetica (strain ATCC 39073 / JCM 9320) protein is Putative regulatory protein Moth_0891.